The following is a 216-amino-acid chain: Orotate phosphoribosyltransferase (216 aa).

Lys30 contacts 5-phospho-alpha-D-ribose 1-diphosphate. Position 38–39 (38–39 (FF)) interacts with orotate. 5-phospho-alpha-D-ribose 1-diphosphate is bound by residues 75 to 76 (YK), Arg102, Lys103, Lys106, His108, and 128 to 136 (DDVITAGTA). Residues Thr132 and Arg160 each contribute to the orotate site.

This sequence belongs to the purine/pyrimidine phosphoribosyltransferase family. PyrE subfamily. Homodimer. The cofactor is Mg(2+).

The enzyme catalyses orotidine 5'-phosphate + diphosphate = orotate + 5-phospho-alpha-D-ribose 1-diphosphate. It participates in pyrimidine metabolism; UMP biosynthesis via de novo pathway; UMP from orotate: step 1/2. Catalyzes the transfer of a ribosyl phosphate group from 5-phosphoribose 1-diphosphate to orotate, leading to the formation of orotidine monophosphate (OMP). This chain is Orotate phosphoribosyltransferase, found in Acinetobacter baumannii (strain ATCC 17978 / DSM 105126 / CIP 53.77 / LMG 1025 / NCDC KC755 / 5377).